A 457-amino-acid polypeptide reads, in one-letter code: Argininosuccinate lyase (457 aa).

The protein belongs to the lyase 1 family. Argininosuccinate lyase subfamily.

Its subcellular location is the cytoplasm. The catalysed reaction is 2-(N(omega)-L-arginino)succinate = fumarate + L-arginine. It participates in amino-acid biosynthesis; L-arginine biosynthesis; L-arginine from L-ornithine and carbamoyl phosphate: step 3/3. This is Argininosuccinate lyase from Serratia proteamaculans (strain 568).